We begin with the raw amino-acid sequence, 400 residues long: Probable peptidoglycan glycosyltransferase FtsW (400 aa).

The Cytoplasmic portion of the chain corresponds to Met-1–Gln-29. A helical membrane pass occupies residues Leu-30–Phe-50. The Periplasmic portion of the chain corresponds to Pro-51–Pro-60. A helical transmembrane segment spans residues Phe-61–Val-81. Residues Leu-82–His-95 lie on the Cytoplasmic side of the membrane. A helical membrane pass occupies residues Leu-96 to Gly-116. Over Ala-117–Pro-122 the chain is Periplasmic. Residues Leu-123–Ala-143 form a helical membrane-spanning segment. The Cytoplasmic segment spans residues Gly-144–Asp-155. The chain crosses the membrane as a helical span at residues Ser-156–Met-176. The Periplasmic portion of the chain corresponds to Gln-177 to Pro-178. A helical membrane pass occupies residues Asp-179–Ala-199. Lys-200 is a topological domain (cytoplasmic). The chain crosses the membrane as a helical span at residues Leu-201–Ala-221. Residues Glu-222–Gly-290 are Periplasmic-facing. The chain crosses the membrane as a helical span at residues Phe-291 to Ile-311. The Cytoplasmic segment spans residues Gly-312 to Arg-321. A helical membrane pass occupies residues Phe-322–Val-342. At Gly-343–Leu-356 the chain is on the periplasmic side. A helical membrane pass occupies residues Pro-357 to Ile-377. Residues Arg-378 to Lys-400 are Cytoplasmic-facing.

This sequence belongs to the SEDS family. FtsW subfamily.

The protein localises to the cell inner membrane. The catalysed reaction is [GlcNAc-(1-&gt;4)-Mur2Ac(oyl-L-Ala-gamma-D-Glu-L-Lys-D-Ala-D-Ala)](n)-di-trans,octa-cis-undecaprenyl diphosphate + beta-D-GlcNAc-(1-&gt;4)-Mur2Ac(oyl-L-Ala-gamma-D-Glu-L-Lys-D-Ala-D-Ala)-di-trans,octa-cis-undecaprenyl diphosphate = [GlcNAc-(1-&gt;4)-Mur2Ac(oyl-L-Ala-gamma-D-Glu-L-Lys-D-Ala-D-Ala)](n+1)-di-trans,octa-cis-undecaprenyl diphosphate + di-trans,octa-cis-undecaprenyl diphosphate + H(+). It participates in cell wall biogenesis; peptidoglycan biosynthesis. Peptidoglycan polymerase that is essential for cell division. The chain is Probable peptidoglycan glycosyltransferase FtsW from Aliivibrio salmonicida (strain LFI1238) (Vibrio salmonicida (strain LFI1238)).